The primary structure comprises 303 residues: RING finger protein 148 (303 aa).

The first 34 residues, M1 to G34, serve as a signal peptide directing secretion. N-linked (GlcNAc...) asparagine glycosylation is present at N43. Residues H65–I167 enclose the PA domain. The helical transmembrane segment at W186–Y208 threads the bilayer. Residues C256–K297 form an RING-type; atypical zinc finger.

It localises to the membrane. This Bos taurus (Bovine) protein is RING finger protein 148 (RNF148).